Reading from the N-terminus, the 408-residue chain is Succinylornithine transaminase (408 aa).

Residue Lys252 is modified to N6-(pyridoxal phosphate)lysine.

This sequence belongs to the class-III pyridoxal-phosphate-dependent aminotransferase family. AstC subfamily. The cofactor is pyridoxal 5'-phosphate.

It catalyses the reaction N(2)-succinyl-L-ornithine + 2-oxoglutarate = N-succinyl-L-glutamate 5-semialdehyde + L-glutamate. It functions in the pathway amino-acid degradation; L-arginine degradation via AST pathway; L-glutamate and succinate from L-arginine: step 3/5. Functionally, catalyzes the transamination of N(2)-succinylornithine and alpha-ketoglutarate into N(2)-succinylglutamate semialdehyde and glutamate. Can also act as an acetylornithine aminotransferase. The chain is Succinylornithine transaminase from Salmonella choleraesuis (strain SC-B67).